A 615-amino-acid polypeptide reads, in one-letter code: DNA mismatch repair protein MutL (615 aa).

The segment at 369–397 (REPVAPRYTPAPASGSRPAAPWPNAQPGY) is disordered. Positions 378–391 (PAPASGSRPAAPWP) are enriched in low complexity.

It belongs to the DNA mismatch repair MutL/HexB family.

In terms of biological role, this protein is involved in the repair of mismatches in DNA. It is required for dam-dependent methyl-directed DNA mismatch repair. May act as a 'molecular matchmaker', a protein that promotes the formation of a stable complex between two or more DNA-binding proteins in an ATP-dependent manner without itself being part of a final effector complex. The chain is DNA mismatch repair protein MutL from Escherichia coli (strain SMS-3-5 / SECEC).